Here is a 338-residue protein sequence, read N- to C-terminus: D-erythrose-4-phosphate dehydrogenase (338 aa).

11 to 12 contributes to the NAD(+) binding site; that stretch reads RI. Residues 153-155, Arg-199, 212-213, and Arg-235 each bind substrate; these read SCT and TK. Cys-154 functions as the Nucleophile in the catalytic mechanism. Asn-317 is a binding site for NAD(+).

It belongs to the glyceraldehyde-3-phosphate dehydrogenase family. Epd subfamily. In terms of assembly, homotetramer.

The protein resides in the cytoplasm. The enzyme catalyses D-erythrose 4-phosphate + NAD(+) + H2O = 4-phospho-D-erythronate + NADH + 2 H(+). It participates in cofactor biosynthesis; pyridoxine 5'-phosphate biosynthesis; pyridoxine 5'-phosphate from D-erythrose 4-phosphate: step 1/5. In terms of biological role, catalyzes the NAD-dependent conversion of D-erythrose 4-phosphate to 4-phosphoerythronate. This chain is D-erythrose-4-phosphate dehydrogenase, found in Shewanella loihica (strain ATCC BAA-1088 / PV-4).